A 196-amino-acid chain; its full sequence is UPF0316 protein LBL_2483 (196 aa).

Transmembrane regions (helical) follow at residues 12–32, 44–64, and 70–90; these read YCVL…IGTI, IAAS…TQVI, and ALCY…GMIL.

Belongs to the UPF0316 family.

It is found in the cell membrane. This Leptospira borgpetersenii serovar Hardjo-bovis (strain L550) protein is UPF0316 protein LBL_2483.